A 283-amino-acid chain; its full sequence is MAEITASLVKELRERTGAGMMDCKKALTEANGDIELAIENMRKSGAIKAAKKAGNVAADGVIKTKINGNVAFILEVNCQTDFVAKDAGFQAFADKVLDAAVAGKITDVEVLKAQFEEERVALVAKIGENINIRRVASLEGDVLGSYQHGARIGVLVAAKGADEELVKQLAMHVAASKPEFVKPEDVSADVVEKEYQVQLDIAMQSGKPKEIAEKMVEGRMKKFTGEVSLTGQPFVMEPSKSVGQLLKEHNADVTGFIRFEVGEGIEKVETDFAAEVAAMSKQS.

Positions 80–83 are involved in Mg(2+) ion dislocation from EF-Tu; sequence TDFV.

This sequence belongs to the EF-Ts family.

It localises to the cytoplasm. Its function is as follows. Associates with the EF-Tu.GDP complex and induces the exchange of GDP to GTP. It remains bound to the aminoacyl-tRNA.EF-Tu.GTP complex up to the GTP hydrolysis stage on the ribosome. This Salmonella agona (strain SL483) protein is Elongation factor Ts.